Consider the following 180-residue polypeptide: NAD(P)H-quinone oxidoreductase subunit I, chloroplastic (180 aa).

2 consecutive 4Fe-4S ferredoxin-type domains span residues 55–84 (GRIH…VDWR) and 95–124 (LNYS…MTEE). Residues Cys64, Cys67, Cys70, Cys74, Cys104, Cys107, Cys110, and Cys114 each contribute to the [4Fe-4S] cluster site.

The protein belongs to the complex I 23 kDa subunit family. NDH is composed of at least 16 different subunits, 5 of which are encoded in the nucleus. It depends on [4Fe-4S] cluster as a cofactor.

Its subcellular location is the plastid. The protein resides in the chloroplast thylakoid membrane. The enzyme catalyses a plastoquinone + NADH + (n+1) H(+)(in) = a plastoquinol + NAD(+) + n H(+)(out). The catalysed reaction is a plastoquinone + NADPH + (n+1) H(+)(in) = a plastoquinol + NADP(+) + n H(+)(out). Functionally, NDH shuttles electrons from NAD(P)H:plastoquinone, via FMN and iron-sulfur (Fe-S) centers, to quinones in the photosynthetic chain and possibly in a chloroplast respiratory chain. The immediate electron acceptor for the enzyme in this species is believed to be plastoquinone. Couples the redox reaction to proton translocation, and thus conserves the redox energy in a proton gradient. The sequence is that of NAD(P)H-quinone oxidoreductase subunit I, chloroplastic from Oryza nivara (Indian wild rice).